The sequence spans 329 residues: NADH-quinone oxidoreductase subunit H (329 aa).

8 consecutive transmembrane segments (helical) span residues 9–29 (ILKV…LTYV), 79–99 (IAPV…PFFP), 117–137 (VGIL…LLAG), 162–182 (VSGL…LIEI), 188–208 (GGIF…FLIA), 243–263 (FFIG…LLFF), 269–289 (LWFI…LFLF), and 309–329 (WKVL…VLIL).

It belongs to the complex I subunit 1 family. In terms of assembly, NDH-1 is composed of 14 different subunits. Subunits NuoA, H, J, K, L, M, N constitute the membrane sector of the complex.

The protein localises to the cell inner membrane. The catalysed reaction is a quinone + NADH + 5 H(+)(in) = a quinol + NAD(+) + 4 H(+)(out). Functionally, NDH-1 shuttles electrons from NADH, via FMN and iron-sulfur (Fe-S) centers, to quinones in the respiratory chain. The immediate electron acceptor for the enzyme in this species is believed to be ubiquinone. Couples the redox reaction to proton translocation (for every two electrons transferred, four hydrogen ions are translocated across the cytoplasmic membrane), and thus conserves the redox energy in a proton gradient. This subunit may bind ubiquinone. The protein is NADH-quinone oxidoreductase subunit H of Wolinella succinogenes (strain ATCC 29543 / DSM 1740 / CCUG 13145 / JCM 31913 / LMG 7466 / NCTC 11488 / FDC 602W) (Vibrio succinogenes).